Consider the following 185-residue polypeptide: Putative lipoprotein LprB (185 aa).

The first 24 residues, 1–24 (MRRKVRRLTLAVSALVALFPAVAG), serve as a signal peptide directing secretion. C25 is lipidated: N-palmitoyl cysteine. C25 carries the S-diacylglycerol cysteine lipid modification. The tract at residues 26 to 50 (SDSGDNKPGATIPSTPANAEGRHGP) is disordered.

The protein localises to the cell membrane. In Mycobacterium bovis (strain ATCC BAA-935 / AF2122/97), this protein is Putative lipoprotein LprB (lprB).